Reading from the N-terminus, the 298-residue chain is Probable tRNA(His) guanylyltransferase (298 aa).

Asp58, Gly59, and Asp105 together coordinate Mg(2+). Residues 58–63 (DGRNFH) and 104–105 (SD) contribute to the GTP site.

It belongs to the tRNA(His) guanylyltransferase family. As to quaternary structure, homotetramer. Interacts with MFN1 and MFN2; functions as a guanyl-nucleotide exchange factor/GEF for MFN2 and also probably MFN1. Mg(2+) serves as cofactor.

Its subcellular location is the cytoplasm. It localises to the mitochondrion. The enzyme catalyses a 5'-end ribonucleotide-tRNA(His) + GTP + ATP + H2O = a 5'-end phospho-guanosine-ribonucleotide-tRNA(His) + AMP + 2 diphosphate + H(+). Adds a GMP to the 5'-end of tRNA(His) after transcription and RNase P cleavage. This step is essential for proper recognition of the tRNA and for the fidelity of protein synthesis. Also functions as a guanyl-nucleotide exchange factor/GEF for the MFN1 and MFN2 mitofusins thereby regulating mitochondrial fusion. By regulating both mitochondrial dynamics and bioenergetic function, it contributes to cell survival following oxidative stress. The polypeptide is Probable tRNA(His) guanylyltransferase (THG1L) (Bos taurus (Bovine)).